A 184-amino-acid chain; its full sequence is Ethylene-responsive transcription factor ERF122 (184 aa).

The segment at residues 120–177 (KYKGVRKKPSGKWAAEIWDPRSKSRRWLGTFLTAEMAAQSYNDAAAEYRARRGKTNGE) is a DNA-binding region (AP2/ERF).

The protein belongs to the AP2/ERF transcription factor family. ERF subfamily.

It is found in the nucleus. Functionally, probably acts as a transcriptional activator. Binds to the GCC-box pathogenesis-related promoter element. May be involved in the regulation of gene expression by stress factors and by components of stress signal transduction pathways. This chain is Ethylene-responsive transcription factor ERF122 (ERF122), found in Arabidopsis thaliana (Mouse-ear cress).